The following is a 122-amino-acid chain: Small ribosomal subunit protein uS13 (122 aa).

The segment at 97–122 (PVRGQRTHTNARTRKGPAKAIAGKKK) is disordered.

This sequence belongs to the universal ribosomal protein uS13 family. As to quaternary structure, part of the 30S ribosomal subunit. Forms a loose heterodimer with protein S19. Forms two bridges to the 50S subunit in the 70S ribosome.

Located at the top of the head of the 30S subunit, it contacts several helices of the 16S rRNA. In the 70S ribosome it contacts the 23S rRNA (bridge B1a) and protein L5 of the 50S subunit (bridge B1b), connecting the 2 subunits; these bridges are implicated in subunit movement. Contacts the tRNAs in the A and P-sites. The chain is Small ribosomal subunit protein uS13 from Brucella abortus (strain S19).